Here is a 608-residue protein sequence, read N- to C-terminus: Microtubule-associated protein 70-3 (608 aa).

The interval 1–23 is disordered; that stretch reads MADGVEEGNAVAPRGPARRRGTV. A coiled-coil region spans residues 40-346; sequence DPVRVELTRL…ARSEAQLKEK (307 aa). Residues 224–458 form a required for targeting to microtubules region; the sequence is ILDKLQRQKV…HLLNRSTDAV (235 aa). 2 disordered regions span residues 354–493 and 570–608; these read LEDG…TANN and DKEQ…RNYQ. The segment covering 363–379 has biased composition (polar residues); sequence SGSSRLPTEGKSFSNGP. Low complexity predominate over residues 402–421; the sequence is RRSPSFHSRSSLSSSSSLVL. Over residues 476-493 the composition is skewed to polar residues; that stretch reads IENTNSNTDESNKETANN. Residues 542–576 are a coiled coil; it reads LTKAMEVEAKKMRREVAAMEKEVAAMRVDKEQEVK. Residues 586-608 show a composition bias toward low complexity; that stretch reads TGSSQVLSGSRSSSRSGLTRNYQ.

This sequence belongs to the MAP70 family.

Its subcellular location is the cytoplasm. The protein resides in the cytoskeleton. In terms of biological role, plant-specific protein that interact with microtubules. In Oryza sativa subsp. japonica (Rice), this protein is Microtubule-associated protein 70-3 (MAP70.3).